A 341-amino-acid polypeptide reads, in one-letter code: tRNA (cytidine(56)-2'-O)-methyltransferase (341 aa).

S-adenosyl-L-methionine-binding positions include L79 and 104–108; that span reads GAEKV. One can recognise an HD domain in the interval 187 to 294; the sequence is IIRHVETVYK…VAHADNLVSM (108 aa).

The protein belongs to the aTrm56 family. Homodimer.

The protein localises to the cytoplasm. It catalyses the reaction cytidine(56) in tRNA + S-adenosyl-L-methionine = 2'-O-methylcytidine(56) in tRNA + S-adenosyl-L-homocysteine + H(+). Its function is as follows. Specifically catalyzes the AdoMet-dependent 2'-O-ribose methylation of cytidine at position 56 in tRNAs. In Picrophilus torridus (strain ATCC 700027 / DSM 9790 / JCM 10055 / NBRC 100828 / KAW 2/3), this protein is tRNA (cytidine(56)-2'-O)-methyltransferase.